The following is a 466-amino-acid chain: UDP-N-acetylmuramoylalanine--D-glutamate ligase (466 aa).

Residue 139-145 participates in ATP binding; sequence GTAGKGG.

This sequence belongs to the MurCDEF family.

The protein localises to the cytoplasm. It catalyses the reaction UDP-N-acetyl-alpha-D-muramoyl-L-alanine + D-glutamate + ATP = UDP-N-acetyl-alpha-D-muramoyl-L-alanyl-D-glutamate + ADP + phosphate + H(+). It participates in cell wall biogenesis; peptidoglycan biosynthesis. Cell wall formation. Catalyzes the addition of glutamate to the nucleotide precursor UDP-N-acetylmuramoyl-L-alanine (UMA). The polypeptide is UDP-N-acetylmuramoylalanine--D-glutamate ligase (Deinococcus geothermalis (strain DSM 11300 / CIP 105573 / AG-3a)).